The chain runs to 311 residues: MKHFFKSLTLAIALAASVLFWSPQAQAYPFYAQQGYESPREATGRIVCANCHLAAKPIQVEVPQAVTPDSVFEAVVKIPYDTSVQQVLGDGSKGGLNVGAVLMLPEGFKIAPPDRLPEELQAKTSGIYYQPYSDDQQNIILVGPLPGEQYQEIVFPILAPNPGTDKSIHFGKYAVHAGGNRGRGQVYPNGEKSNNNVFTAPIAGTITSITPNPDGSTAVVITPENGEAVTETVPAGPELIVREGQTVVAGAALTNNPNVGGFGQKDTEIVLQDPNRIKWLLVFFAAITLSQILLVLKKKQVEKVQAAEMSF.

An N-terminal signal peptide occupies residues 1–27; it reads MKHFFKSLTLAIALAASVLFWSPQAQA. Tyrosine 28, cysteine 48, cysteine 51, and histidine 52 together coordinate heme. A helical transmembrane segment spans residues 279 to 296; the sequence is WLLVFFAAITLSQILLVL.

It belongs to the cytochrome f family. In terms of assembly, the 4 large subunits of the cytochrome b6-f complex are cytochrome b6, subunit IV (17 kDa polypeptide, PetD), cytochrome f and the Rieske protein, while the 4 small subunits are PetG, PetL, PetM and PetN. The complex functions as a dimer. The cofactor is heme.

The protein localises to the cellular thylakoid membrane. Functionally, component of the cytochrome b6-f complex, which mediates electron transfer between photosystem II (PSII) and photosystem I (PSI), cyclic electron flow around PSI, and state transitions. The chain is Cytochrome f from Synechococcus elongatus.